The sequence spans 1066 residues: Elongation factor 3 (1066 aa).

HEAT repeat units lie at residues 112-149 (FIFE…VMSP), 151-188 (AAQQ…ACPE), 192-229 (ALMP…LISN), 231-268 (DIER…EVDS), 269-306 (ATLA…LVDN), and 312-353 (PFLG…VTGD). Residue T418 coordinates ADP. 2 consecutive ABC transporter domains span residues 454–672 (EEGE…YAEL) and 699–1015 (IKMK…KKEE). Residues N735, E944, N947, and H973 each coordinate ADP. The segment at 997 to 1066 (GHDWTESNSK…YDSADELEDL (70 aa)) is disordered. The span at 1042–1054 (RKAKKDRMARKKA) shows a compositional bias: basic residues.

This sequence belongs to the ABC transporter superfamily. ABCF family. EF3 subfamily.

Its subcellular location is the cytoplasm. The protein resides in the cytosol. It catalyses the reaction ATP + H2O = ADP + phosphate + H(+). It functions in the pathway protein biosynthesis; polypeptide chain elongation. Functionally, ribosome-dependent ATPase that functions in cytoplasmic translation elongation. Required for the ATP-dependent release of deacylated tRNA from the ribosomal E-site during protein biosynthesis. Stimulates the eEF1A-dependent binding of aminoacyl-tRNA to the ribosomal A-site, which has reduced affinity for tRNA as long as the E-site is occupied. Assists translation termination by stimulating the release of nascent protein from the ribosome by release factors. In Mycosarcoma maydis (Corn smut fungus), this protein is Elongation factor 3.